The primary structure comprises 606 residues: RUN and FYVE domain-containing protein 2 (606 aa).

Residues 37–169 form the RUN domain; that stretch reads DSDYPPLQQF…IDANLCVKGE (133 aa). A coiled-coil region spans residues 210–534; the sequence is EELNRQLNST…IKEANKALQG (325 aa). An FYVE-type zinc finger spans residues 540–598; it reads DKEATHCKLCEKEFSLSKRKHHCRNCGEIFCNACSDNELPLPSSPKPVRVCDSCHALLI. Positions 546, 549, 562, 565, 570, 573, 590, and 593 each coordinate Zn(2+).

Interacts with BMX. Expressed in brain, lung and testis.

The protein resides in the nucleus. In Homo sapiens (Human), this protein is RUN and FYVE domain-containing protein 2 (RUFY2).